We begin with the raw amino-acid sequence, 276 residues long: Large ribosomal subunit protein uL2 (276 aa).

2 disordered regions span residues 37–59 (QFQKSGRNNNGHITTRHKGGGHK) and 224–276 (VAMN…RHKR). Over residues 50 to 59 (TTRHKGGGHK) the composition is skewed to basic residues.

It belongs to the universal ribosomal protein uL2 family. As to quaternary structure, part of the 50S ribosomal subunit. Forms a bridge to the 30S subunit in the 70S ribosome.

One of the primary rRNA binding proteins. Required for association of the 30S and 50S subunits to form the 70S ribosome, for tRNA binding and peptide bond formation. It has been suggested to have peptidyltransferase activity; this is somewhat controversial. Makes several contacts with the 16S rRNA in the 70S ribosome. In Ralstonia nicotianae (strain ATCC BAA-1114 / GMI1000) (Ralstonia solanacearum), this protein is Large ribosomal subunit protein uL2.